We begin with the raw amino-acid sequence, 488 residues long: Cobyric acid synthase (488 aa).

The region spanning 248–441 is the GATase cobBQ-type domain; sequence VLRVVVPALP…VHGLFDAPDA (194 aa). The active-site Nucleophile is the Cys-328. His-433 is a catalytic residue.

The protein belongs to the CobB/CobQ family. CobQ subfamily.

It functions in the pathway cofactor biosynthesis; adenosylcobalamin biosynthesis. Catalyzes amidations at positions B, D, E, and G on adenosylcobyrinic A,C-diamide. NH(2) groups are provided by glutamine, and one molecule of ATP is hydrogenolyzed for each amidation. The polypeptide is Cobyric acid synthase (Burkholderia ambifaria (strain ATCC BAA-244 / DSM 16087 / CCUG 44356 / LMG 19182 / AMMD) (Burkholderia cepacia (strain AMMD))).